The sequence spans 1050 residues: Inositol hexakisphosphate kinase 1 (1050 aa).

Disordered regions lie at residues 87 to 117 (KITR…LSSS), 129 to 177 (PAIK…IQNV), 269 to 319 (RQEN…DNEH), and 396 to 423 (SDLD…NNND). A Phosphoserine modification is found at S150. The segment covering 156–173 (KQQSHQPQVLHHQTSLKP) has biased composition (polar residues). Residues 290–306 (ESIKEKPNTFEQDKEGE) are compositionally biased toward basic and acidic residues. Positions 307–316 (QADEEEDEGD) are enriched in acidic residues. Phosphoserine is present on S396. The span at 402–417 (NNGKNDTSNENKDIEV) shows a compositional bias: basic and acidic residues. Residue S469 is modified to Phosphoserine. Residues 508 to 522 (NDSYFSSSSSHNSCS) are compositionally biased toward low complexity. Disordered regions lie at residues 508–539 (NDSY…DSGS) and 562–625 (RKRN…PNLQ). S537, S539, S566, S583, S589, S646, S664, and S670 each carry phosphoserine. The span at 566–624 (SNTTTMGNHNARLGSSPSFLTQKSRASSHDASNTSMKTLGDSSSQASLQMDDSKVNPNL) shows a compositional bias: polar residues. Substrate is bound at residue 772–780 (PCALDLKMG).

It belongs to the inositol phosphokinase (IPK) family.

Its subcellular location is the cytoplasm. It carries out the reaction 1D-myo-inositol hexakisphosphate + ATP = 5-diphospho-1D-myo-inositol 1,2,3,4,6-pentakisphosphate + ADP. The catalysed reaction is 1-diphospho-1D-myo-inositol 2,3,4,5,6-pentakisphosphate + ATP + H(+) = 1,5-bis(diphospho)-1D-myo-inositol 2,3,4,6-tetrakisphosphate + ADP. Functionally, converts inositol hexakisphosphate (InsP6) to diphosphoinositol pentakisphosphate (InsP7/PP-InsP5). Involved in phosphate regulation and polyphosphate accumulation. Required for resistance to salt stress, cell wall integrity, vacuole morphogenesis, and telomere maintenance. The polypeptide is Inositol hexakisphosphate kinase 1 (KCS1) (Saccharomyces cerevisiae (strain ATCC 204508 / S288c) (Baker's yeast)).